The sequence spans 270 residues: Malonyl-[acyl-carrier protein] O-methyltransferase (270 aa).

It belongs to the methyltransferase superfamily.

It catalyses the reaction malonyl-[ACP] + S-adenosyl-L-methionine = malonyl-[ACP] methyl ester + S-adenosyl-L-homocysteine. The protein operates within cofactor biosynthesis; biotin biosynthesis. In terms of biological role, converts the free carboxyl group of a malonyl-thioester to its methyl ester by transfer of a methyl group from S-adenosyl-L-methionine (SAM). It allows to synthesize pimeloyl-ACP via the fatty acid synthetic pathway. This chain is Malonyl-[acyl-carrier protein] O-methyltransferase, found in Marinomonas sp. (strain MWYL1).